The chain runs to 222 residues: 2-C-methyl-D-erythritol 4-phosphate cytidylyltransferase (222 aa).

The protein belongs to the IspD/TarI cytidylyltransferase family. IspD subfamily.

The enzyme catalyses 2-C-methyl-D-erythritol 4-phosphate + CTP + H(+) = 4-CDP-2-C-methyl-D-erythritol + diphosphate. Its pathway is isoprenoid biosynthesis; isopentenyl diphosphate biosynthesis via DXP pathway; isopentenyl diphosphate from 1-deoxy-D-xylulose 5-phosphate: step 2/6. Catalyzes the formation of 4-diphosphocytidyl-2-C-methyl-D-erythritol from CTP and 2-C-methyl-D-erythritol 4-phosphate (MEP). The sequence is that of 2-C-methyl-D-erythritol 4-phosphate cytidylyltransferase from Azobacteroides pseudotrichonymphae genomovar. CFP2.